The chain runs to 196 residues: MKKSKASDVAILAIFIAIMVVVQLFTQFVINVWPFPVKPTLLHLPVIIGSIILGWRKGAFLGLVWGLISFVTATIVTTPTSFLFSPFQPVIGTHHGSPWGLFIAFIPRILVGILPYFVYKIANNRLGAGLAAFAGTATNTVLVLTSIFLFFGSTLKWSLSYLLGAIVATNSLTEVIIAVILTTAIVPALTKARNNS.

6 helical membrane passes run 10–30, 35–55, 58–78, 99–119, 131–151, and 161–181; these read AILA…QFVI, FPVK…ILGW, GAFL…IVTT, WGLF…YFVY, AAFA…FLFF, and YLLG…AVIL.

In terms of assembly, in E.coli forms a stable energy-coupling factor (ECF) transporter complex composed of 2 membrane-embedded substrate-binding protein (S component), 2 ATP-binding proteins (A and A' components) and 2 transmembrane proteins (T component), probably with a stoichiometry of 2:1:1:2. May be able to interact with more than 1 S component at a time.

It is found in the cell membrane. Its function is as follows. Probably a pantothenic acid-binding protein that interacts with the energy-coupling factor (ECF) ABC-transporter complex. Unlike classic ABC transporters this ECF transporter provides the energy necessary to transport a number of different substrates. The substrates themselves are bound by transmembrane, not extracytoplasmic soluble proteins. This chain is Pantothenic acid transporter PanT (panT), found in Lactococcus lactis subsp. cremoris (strain MG1363).